A 290-amino-acid polypeptide reads, in one-letter code: Light-independent protochlorophyllide reductase iron-sulfur ATP-binding protein (290 aa).

ATP is bound by residues Gly-10–Thr-15 and Lys-39. Ser-14 provides a ligand contact to Mg(2+). Cys-95 and Cys-129 together coordinate [4Fe-4S] cluster. Asn-180–Arg-181 lines the ATP pocket.

This sequence belongs to the NifH/BchL/ChlL family. Homodimer. Protochlorophyllide reductase is composed of three subunits; ChlL, ChlN and ChlB. [4Fe-4S] cluster serves as cofactor.

The protein localises to the plastid. Its subcellular location is the chloroplast. The enzyme catalyses chlorophyllide a + oxidized 2[4Fe-4S]-[ferredoxin] + 2 ADP + 2 phosphate = protochlorophyllide a + reduced 2[4Fe-4S]-[ferredoxin] + 2 ATP + 2 H2O. Its pathway is porphyrin-containing compound metabolism; chlorophyll biosynthesis (light-independent). Component of the dark-operative protochlorophyllide reductase (DPOR) that uses Mg-ATP and reduced ferredoxin to reduce ring D of protochlorophyllide (Pchlide) to form chlorophyllide a (Chlide). This reaction is light-independent. The L component serves as a unique electron donor to the NB-component of the complex, and binds Mg-ATP. The protein is Light-independent protochlorophyllide reductase iron-sulfur ATP-binding protein of Chaetosphaeridium globosum (Charophycean green alga).